Reading from the N-terminus, the 467-residue chain is Dimethylamine methyltransferase MtbB2 (467 aa).

Position 356 (O356) is a non-standard amino acid, pyrrolysine.

The protein belongs to the dimethylamine methyltransferase family.

The catalysed reaction is Co(I)-[dimethylamine-specific corrinoid protein] + dimethylamine + H(+) = methyl-Co(III)-[dimethylamine-specific corrinoid protein] + methylamine. The protein operates within one-carbon metabolism; methanogenesis from dimethylamine. Functionally, catalyzes the transfer of a methyl group from dimethylamine to the corrinoid cofactor of MtbC. The sequence is that of Dimethylamine methyltransferase MtbB2 (mtbB2) from Methanosarcina barkeri (strain Fusaro / DSM 804).